We begin with the raw amino-acid sequence, 807 residues long: Glycerol-3-phosphate acyltransferase (807 aa).

The short motif at 308–313 (CHRSHM) is the HXXXXD motif element.

Belongs to the GPAT/DAPAT family.

It localises to the cell inner membrane. The catalysed reaction is sn-glycerol 3-phosphate + an acyl-CoA = a 1-acyl-sn-glycero-3-phosphate + CoA. Its pathway is phospholipid metabolism; CDP-diacylglycerol biosynthesis; CDP-diacylglycerol from sn-glycerol 3-phosphate: step 1/3. The sequence is that of Glycerol-3-phosphate acyltransferase from Shewanella woodyi (strain ATCC 51908 / MS32).